The chain runs to 104 residues: Proteasome subunit beta type-8 (104 aa).

This sequence belongs to the peptidase T1B family. The 26S proteasome consists of a 20S proteasome core and two 19S regulatory subunits. The 20S proteasome core is composed of 28 subunits that are arranged in four stacked rings, resulting in a barrel-shaped structure. The two end rings are each formed by seven alpha subunits, and the two central rings are each formed by seven beta subunits. The catalytic chamber with the active sites is on the inside of the barrel. Component of the immunoproteasome, where it displaces the equivalent housekeeping subunit PSMB5. Component of the spermatoproteasome, a form of the proteasome specifically found in testis. Directly interacts with POMP.

The protein resides in the cytoplasm. Its subcellular location is the nucleus. It catalyses the reaction Cleavage of peptide bonds with very broad specificity.. In terms of biological role, the proteasome is a multicatalytic proteinase complex which is characterized by its ability to cleave peptides with Arg, Phe, Tyr, Leu, and Glu adjacent to the leaving group at neutral or slightly basic pH. The proteasome has an ATP-dependent proteolytic activity. This subunit is involved in antigen processing to generate class I binding peptides. May participate in the generation of spliced peptides resulting from the ligation of two separate proteasomal cleavage products that are not contiguous in the parental protein. Required for adipocyte differentiation. The protein is Proteasome subunit beta type-8 (PSMB8) of Sus scrofa (Pig).